The sequence spans 291 residues: Phosphatidylglycerol--prolipoprotein diacylglyceryl transferase (291 aa).

Transmembrane regions (helical) follow at residues 21–41 (VALHWYGLMYLVGFVFAMWLA), 60–80 (LLYAGFLGVFLGGRIGYVLFY), 96–116 (WDGGMSFHGGLIGVILVMIIF), 130–150 (FIAPLIPFGLGAGRLGNFING), 198–218 (SQLYELALEGVVLFIILNLFI), 225–245 (GAVSGLFLIGYGAFRIIVEFF), and 260–280 (ISMGQILSIPMIIAGAIMMVW). Arg143 is an a 1,2-diacyl-sn-glycero-3-phospho-(1'-sn-glycerol) binding site.

Belongs to the Lgt family.

Its subcellular location is the cell inner membrane. The enzyme catalyses L-cysteinyl-[prolipoprotein] + a 1,2-diacyl-sn-glycero-3-phospho-(1'-sn-glycerol) = an S-1,2-diacyl-sn-glyceryl-L-cysteinyl-[prolipoprotein] + sn-glycerol 1-phosphate + H(+). It participates in protein modification; lipoprotein biosynthesis (diacylglyceryl transfer). In terms of biological role, catalyzes the transfer of the diacylglyceryl group from phosphatidylglycerol to the sulfhydryl group of the N-terminal cysteine of a prolipoprotein, the first step in the formation of mature lipoproteins. This is Phosphatidylglycerol--prolipoprotein diacylglyceryl transferase from Salmonella agona (strain SL483).